A 262-amino-acid chain; its full sequence is WW domain-binding protein 2 (262 aa).

In terms of domain architecture, GRAM spans Met1–Gln84. A Phosphotyrosine modification is found at Tyr192. The PPxY motif 1 signature appears at Pro196 to Tyr200. Over residues Pro197–Pro206 the composition is skewed to pro residues. The disordered stretch occupies residues Pro197–Gln262. A compositionally biased stretch (low complexity) spans Ala219 to Ala231. At Tyr232 the chain carries Phosphotyrosine. The span at Ser246 to Pro255 shows a compositional bias: pro residues. The PPxY motif 2 motif lies at Pro249–Tyr253.

As to quaternary structure, binds to the WW domain of YAP1, WWP1 and WWP2. Interacts with NEDD4. Interacts with ESR1 and UBE3A. In terms of processing, phosphorylated in repsonse to EGF as well as estrogen and progesterone hormones. Tyr-192 and Tyr-232 are phosphorylated by YES and SRC inducing nuclear translocation.

Its subcellular location is the cytoplasm. It is found in the nucleus. In terms of biological role, acts as a transcriptional coactivator of estrogen and progesterone receptors (ESR1 and PGR) upon hormone activation. In presence of estrogen, binds to ESR1-responsive promoters. Synergizes with YAP1 to enhance PGR activity. Modulates expression of post-synaptic scaffolding proteins via regulation of ESR1, ESR2 and PGR. The protein is WW domain-binding protein 2 (Wbp2) of Rattus norvegicus (Rat).